We begin with the raw amino-acid sequence, 159 residues long: Odorant-binding protein (159 aa).

Belongs to the calycin superfamily. Lipocalin family. In terms of assembly, homodimer.

The protein localises to the secreted. This protein binds a wide variety of chemical odorants. This is Odorant-binding protein from Bos taurus (Bovine).